A 274-amino-acid chain; its full sequence is Siroheme biosynthesis protein MET8 (274 aa).

Residues 23 to 24 (EV), 43 to 45 (SPD), and F93 each bind NAD(+). The active-site Proton acceptor is the D141.

Belongs to the precorrin-2 dehydrogenase / sirohydrochlorin ferrochelatase family. MET8 subfamily. In terms of assembly, homodimer.

It catalyses the reaction precorrin-2 + NAD(+) = sirohydrochlorin + NADH + 2 H(+). It carries out the reaction siroheme + 2 H(+) = sirohydrochlorin + Fe(2+). Its pathway is porphyrin-containing compound metabolism; siroheme biosynthesis; siroheme from sirohydrochlorin: step 1/1. The protein operates within porphyrin-containing compound metabolism; siroheme biosynthesis; sirohydrochlorin from precorrin-2: step 1/1. Catalyzes the conversion of precorrin-2 into siroheme. This reaction consist of the NAD-dependent oxidation of precorrin-2 into sirohydrochlorin and its subsequent ferrochelation into siroheme. This Saccharomyces cerevisiae (strain ATCC 204508 / S288c) (Baker's yeast) protein is Siroheme biosynthesis protein MET8.